Consider the following 73-residue polypeptide: Translation initiation factor IF-1 (73 aa).

The S1-like domain maps to 1-73 (MGKKEEAFEV…TKGRIVYRER (73 aa)).

Belongs to the IF-1 family. As to quaternary structure, component of the 30S ribosomal translation pre-initiation complex which assembles on the 30S ribosome in the order IF-2 and IF-3, IF-1 and N-formylmethionyl-tRNA(fMet); mRNA recruitment can occur at any time during PIC assembly.

It is found in the cytoplasm. Its function is as follows. One of the essential components for the initiation of protein synthesis. Stabilizes the binding of IF-2 and IF-3 on the 30S subunit to which N-formylmethionyl-tRNA(fMet) subsequently binds. Helps modulate mRNA selection, yielding the 30S pre-initiation complex (PIC). Upon addition of the 50S ribosomal subunit IF-1, IF-2 and IF-3 are released leaving the mature 70S translation initiation complex. The sequence is that of Translation initiation factor IF-1 from Rhodopirellula baltica (strain DSM 10527 / NCIMB 13988 / SH1).